A 209-amino-acid polypeptide reads, in one-letter code: Amelotin (209 aa).

A signal peptide spans 1 to 16 (MRSTILLFCLLGSTRS). Positions 142–209 (AGANPDVQDG…ATTESANGIQ (68 aa)) are disordered.

The protein belongs to the amelotin family. Phosphorylated by FAM20C in vitro. In terms of processing, O-glycosylated.

The protein resides in the secreted. In terms of biological role, is a promoter of calcium phosphate mineralization, playing a critical role in the formation of the compact, mineralized, aprismatic enamel surface layer during the maturation stage of amelogenesis. The polypeptide is Amelotin (AMTN) (Homo sapiens (Human)).